Consider the following 305-residue polypeptide: Methionyl-tRNA formyltransferase (305 aa).

110–113 (SLLP) serves as a coordination point for (6S)-5,6,7,8-tetrahydrofolate.

The protein belongs to the Fmt family.

It carries out the reaction L-methionyl-tRNA(fMet) + (6R)-10-formyltetrahydrofolate = N-formyl-L-methionyl-tRNA(fMet) + (6S)-5,6,7,8-tetrahydrofolate + H(+). Functionally, attaches a formyl group to the free amino group of methionyl-tRNA(fMet). The formyl group appears to play a dual role in the initiator identity of N-formylmethionyl-tRNA by promoting its recognition by IF2 and preventing the misappropriation of this tRNA by the elongation apparatus. The polypeptide is Methionyl-tRNA formyltransferase (Ureaplasma urealyticum serovar 10 (strain ATCC 33699 / Western)).